A 2340-amino-acid polypeptide reads, in one-letter code: Protein pad-1 (2340 aa).

Disordered regions lie at residues 411-458 and 1910-1959; these read KLIK…EPSI and TRNS…RRDP. Basic and acidic residues predominate over residues 415 to 432; the sequence is KRPDSKPPRKPGDREGLH. Over residues 437-448 the composition is skewed to polar residues; the sequence is SLHSGVSGNSED. Residues 1922-1934 show a composition bias toward low complexity; the sequence is GGSITSGSTSTTT.

Belongs to the DOP1 family.

Functionally, essential for cell patterning during gastrulation. May be involved in protein traffic between late Golgi and early endosomes. The sequence is that of Protein pad-1 (pad-1) from Caenorhabditis briggsae.